The following is a 123-amino-acid chain: Small ribosomal subunit protein uS12cz/uS12cy (123 aa).

Belongs to the universal ribosomal protein uS12 family. As to quaternary structure, part of the 30S ribosomal subunit.

The protein localises to the plastid. The protein resides in the chloroplast. Its function is as follows. With S4 and S5 plays an important role in translational accuracy. Located at the interface of the 30S and 50S subunits. The sequence is that of Small ribosomal subunit protein uS12cz/uS12cy (rps12-A) from Nymphaea alba (White water-lily).